Consider the following 338-residue polypeptide: Ketol-acid reductoisomerase (NADP(+)) (338 aa).

The KARI N-terminal Rossmann domain occupies 1–181 (MKVFYDKDAD…GGGRAGIIET (181 aa)). NADP(+) contacts are provided by residues 24–27 (YGSQ), Arg-47, and Ser-52. The active site involves His-107. Gly-133 contributes to the NADP(+) binding site. Residues 182–327 (NFREETETDL…GKLRAMMPWI (146 aa)) enclose the KARI C-terminal knotted domain. Residues Asp-190, Glu-194, Glu-226, and Glu-230 each contribute to the Mg(2+) site. Residue Ser-251 coordinates substrate.

Belongs to the ketol-acid reductoisomerase family. Requires Mg(2+) as cofactor.

It carries out the reaction (2R)-2,3-dihydroxy-3-methylbutanoate + NADP(+) = (2S)-2-acetolactate + NADPH + H(+). The enzyme catalyses (2R,3R)-2,3-dihydroxy-3-methylpentanoate + NADP(+) = (S)-2-ethyl-2-hydroxy-3-oxobutanoate + NADPH + H(+). It functions in the pathway amino-acid biosynthesis; L-isoleucine biosynthesis; L-isoleucine from 2-oxobutanoate: step 2/4. Its pathway is amino-acid biosynthesis; L-valine biosynthesis; L-valine from pyruvate: step 2/4. Involved in the biosynthesis of branched-chain amino acids (BCAA). Catalyzes an alkyl-migration followed by a ketol-acid reduction of (S)-2-acetolactate (S2AL) to yield (R)-2,3-dihydroxy-isovalerate. In the isomerase reaction, S2AL is rearranged via a Mg-dependent methyl migration to produce 3-hydroxy-3-methyl-2-ketobutyrate (HMKB). In the reductase reaction, this 2-ketoacid undergoes a metal-dependent reduction by NADPH to yield (R)-2,3-dihydroxy-isovalerate. This is Ketol-acid reductoisomerase (NADP(+)) from Cupriavidus metallidurans (strain ATCC 43123 / DSM 2839 / NBRC 102507 / CH34) (Ralstonia metallidurans).